Reading from the N-terminus, the 426-residue chain is Cytochrome c biogenesis protein CcsB (426 aa).

3 helical membrane-spanning segments follow: residues 11-31 (LRVA…GTAI), 69-89 (SVWF…CSWR), and 159-179 (VGPL…VWGV).

It belongs to the Ccs1/CcsB family. May interact with CcsA.

It localises to the cellular thylakoid membrane. In terms of biological role, required during biogenesis of c-type cytochromes (cytochrome c6 and cytochrome f) at the step of heme attachment. The polypeptide is Cytochrome c biogenesis protein CcsB (Synechococcus sp. (strain CC9902)).